The following is a 445-amino-acid chain: DDB1- and CUL4-associated factor 13 (445 aa).

Lys-49 carries the post-translational modification N6-acetyllysine. WD repeat units lie at residues 64–104, 107–146, 149–191, 194–234, 236–276, 280–319, and 323–362; these read GHRD…CIRT, AHEG…YGDE, PLHT…PICS, WGFD…PLKK, ILDM…TPVM, DHVS…SREV, and KRMQ…KLGV. The required for nucleolar location stretch occupies residues 353-441; that stretch reads KANASEKLGV…LVSEKKKHVV (89 aa).

It belongs to the WD repeat DCAF13/WDSOF1 family. As to quaternary structure, part of the small subunit (SSU) processome, composed of more than 70 proteins and the RNA chaperone small nucleolar RNA (snoRNA) U3. Component of the DCX(DCAF13) E3 ubiquitin ligase complex, at least composed of CUL4 (CUL4A or CUL4B), DDB1, DCAF13 and RBX1. Interacts (via WD40 domain) with DDB1. Interacts with ESR1 and LATS1. As to expression, expressed in the endometrium during decidualization. Expression is down-regulated in preeclampsia decidual tissues.

The protein resides in the nucleus. The protein localises to the nucleolus. It functions in the pathway protein modification; protein ubiquitination. Its function is as follows. Part of the small subunit (SSU) processome, first precursor of the small eukaryotic ribosomal subunit. During the assembly of the SSU processome in the nucleolus, many ribosome biogenesis factors, an RNA chaperone and ribosomal proteins associate with the nascent pre-rRNA and work in concert to generate RNA folding, modifications, rearrangements and cleavage as well as targeted degradation of pre-ribosomal RNA by the RNA exosome. Participates in the 18S rRNA processing in growing oocytes, being essential for oocyte nonsurrounded nucleolus (NSN) to surrounded nucleolus (SN) transition. In terms of biological role, substrate-recognition component of a DCX (DDB1-CUL4-X-box) E3 ubiquitin-protein ligase complex that plays a key role in embryo preimplantation and is required for normal meiotic cycle progression in oocytes. Acts as a maternal factor that regulates oocyte and zygotic chromatin tightness during maternal to zygotic transition. Also involved in the transformation of the endometrium into the decidua, known as decidualization, providing a solid foundation for implantation of blastocysts. Recognizes the histone methyltransferases SUV39H1 and SUV39H2 and directs them to polyubiquitination and proteasomal degradation, which facilitates the H3K9me3 removal and early zygotic gene expression, essential steps for progressive genome reprogramming and the establishment of pluripotency during preimplantation embryonic development. Supports the spindle assembly and chromosome condensation during oocyte meiotic division by targeting the polyubiquitination and degradation of PTEN, a lipid phosphatase that inhibits PI3K pathway as well as oocyte growth and maturation. Targets PMP22 for polyubiquitination and proteasomal degradation. This chain is DDB1- and CUL4-associated factor 13, found in Homo sapiens (Human).